Reading from the N-terminus, the 146-residue chain is MKDELNKVVIYTDGACSGNPGPGGWAAVLLFDDNEKTICGNDSDTTNNRMELTAVIEALKLLKVAYNVDLYTDSVYVKDGITLWIRKWKVNGWKTANKMPVKNLELWLELDSLANFHKVTWYWVRAHVGDLYNQKADMLARSQIVR.

Residues 4 to 145 (ELNKVVIYTD…ADMLARSQIV (142 aa)) form the RNase H type-1 domain. Residues Asp13, Glu51, Asp73, and Asp137 each coordinate Mg(2+).

Belongs to the RNase H family. As to quaternary structure, monomer. The cofactor is Mg(2+).

Its subcellular location is the cytoplasm. It carries out the reaction Endonucleolytic cleavage to 5'-phosphomonoester.. Functionally, endonuclease that specifically degrades the RNA of RNA-DNA hybrids. This Ehrlichia chaffeensis (strain ATCC CRL-10679 / Arkansas) protein is Ribonuclease H.